A 450-amino-acid chain; its full sequence is Glucose-6-phosphate isomerase (450 aa).

The active-site Proton donor is the E290. Residues H311 and K425 contribute to the active site.

Belongs to the GPI family.

Its subcellular location is the cytoplasm. The enzyme catalyses alpha-D-glucose 6-phosphate = beta-D-fructose 6-phosphate. It functions in the pathway carbohydrate biosynthesis; gluconeogenesis. It participates in carbohydrate degradation; glycolysis; D-glyceraldehyde 3-phosphate and glycerone phosphate from D-glucose: step 2/4. Functionally, catalyzes the reversible isomerization of glucose-6-phosphate to fructose-6-phosphate. The polypeptide is Glucose-6-phosphate isomerase (Limosilactobacillus fermentum (Lactobacillus fermentum)).